The primary structure comprises 157 residues: 2-C-methyl-D-erythritol 2,4-cyclodiphosphate synthase (157 aa).

A divalent metal cation contacts are provided by aspartate 8 and histidine 10. Residues 8 to 10 and 34 to 35 contribute to the 4-CDP-2-C-methyl-D-erythritol 2-phosphate site; these read DVH and HS. Histidine 42 serves as a coordination point for a divalent metal cation. 4-CDP-2-C-methyl-D-erythritol 2-phosphate contacts are provided by residues 56–58, 132–135, and arginine 142; these read DIG and TTNE.

Belongs to the IspF family. As to quaternary structure, homotrimer. A divalent metal cation serves as cofactor.

It catalyses the reaction 4-CDP-2-C-methyl-D-erythritol 2-phosphate = 2-C-methyl-D-erythritol 2,4-cyclic diphosphate + CMP. Its pathway is isoprenoid biosynthesis; isopentenyl diphosphate biosynthesis via DXP pathway; isopentenyl diphosphate from 1-deoxy-D-xylulose 5-phosphate: step 4/6. In terms of biological role, involved in the biosynthesis of isopentenyl diphosphate (IPP) and dimethylallyl diphosphate (DMAPP), two major building blocks of isoprenoid compounds. Catalyzes the conversion of 4-diphosphocytidyl-2-C-methyl-D-erythritol 2-phosphate (CDP-ME2P) to 2-C-methyl-D-erythritol 2,4-cyclodiphosphate (ME-CPP) with a corresponding release of cytidine 5-monophosphate (CMP). This Chlorobaculum parvum (strain DSM 263 / NCIMB 8327) (Chlorobium vibrioforme subsp. thiosulfatophilum) protein is 2-C-methyl-D-erythritol 2,4-cyclodiphosphate synthase.